The chain runs to 376 residues: Light-dependent chlorophyll f synthase (376 aa).

The tract at residues 1-22 is disordered; it reads MKLESDHVIATSDSSDYTSEPT. Polar residues predominate over residues 11 to 22; that stretch reads TSDSSDYTSEPT. 5 consecutive transmembrane segments (helical) span residues 51–68, 140–155, 164–178, 219–240, and 298–312; these read YVGW…TAAT, HFLI…EWEL, WISL…ASVS, LHQL…HGSL, and FLAA…SAAL. H140 contributes to the a chlorophyll binding site. H220 contributes to the a chlorophyll binding site.

It belongs to the reaction center PufL/M/PsbA/D family. In terms of assembly, homodimer.

It localises to the cellular thylakoid membrane. Synthesizes chlorophyll f or chlorophyllide f (Chl f, 2-formyl chlorophyll a), probably by oxidation of chlorophyll a or chlorophyllide a and reduction of plastoquinone. The reaction is probably light-dependent. Chl f absorbs far red light (FRL, 707 nm in 100% methanol), and is synthesized when cells are grown in FRL, where it provides the advantage of extending the spectral range of harvested light in terrestrial cyanobacteria. When ectopically expressed in Synechococcus PCC 7002 (which does not grow in FRL and does not make Chl f) produces Chl f (0.059% of total chlorophyll). This chain is Light-dependent chlorophyll f synthase, found in Chlorogloeopsis fritschii (strain PCC 9212).